A 637-amino-acid chain; its full sequence is MAKMRVRFPMLVLLLGVVFLLAVSIGIAYGEKDVIKNPERPEERQEEERDPRQPPRSRQQEEQEREHRREKERDREPSRGRSESKQSQEEERERRKEHDREREQEQQPQYGRRHEEEEKGEEEEEGQARRQRPQRRREEREQEQGSSSESRRQSGDERRHRHEKREQREEREQEQGSSSGRQSDYGRRQRHEGREQREEREQEQGSSSESHRLRNPYYFSSERFQTRYKNKNGQIRVLERFDQRTNRLENLQNYRIVEFQSRPNTLILPKHSDADYILVVLNGRATITIVNPDKRQAYNLEYGDALRLPAGTTSYILNPDDNQDLRVVKLAIPINNPGKFYDFYPSRTKDQQSYFSGFSKNTLEATFNTHYEEIQRILLGYEDEQEDEEQRREQEQSHQDEGVIVRVSKEQIQELRKHAQSSSRKGKPSESGPFNLRSNEPIYSNKFGNFYEITPDRNPQVQDLDISLIFTEISEGALLLPHYNSKAIFVIVVDEGEGNYELVGIRNQQRQQDEQEVEEVRSYNARLSEGDILVIPAGHPLSINASSNLRLLGFGINADENQRNFLAGSEDNVIRQLDREVKELIFPGSAEDVERLIRNQQQSYFANAQPQQQQQQREKEGRRGRRGPISSILSALY.

A signal peptide spans 1–30 (MAKMRVRFPMLVLLLGVVFLLAVSIGIAYG). Basic and acidic residues-rich tracts occupy residues 33–105 (DVIK…REQE), 136–174 (RREE…REQE), and 184–203 (DYGR…REQE). Disordered stretches follow at residues 33-221 (DVIK…YFSS) and 384-439 (EQED…LRSN). Positions 217–375 (YYFSSERFQT…TFNTHYEEIQ (159 aa)) constitute a Cupin type-1 1 domain. Residues 389 to 417 (EQRREQEQSHQDEGVIVRVSKEQIQELRK) are compositionally biased toward basic and acidic residues. Residues 434 to 594 (FNLRSNEPIY…IFPGSAEDVE (161 aa)) form the Cupin type-1 2 domain. Asn544 is a glycosylation site (N-linked (GlcNAc...) asparagine). Residues 606-615 (ANAQPQQQQQ) show a composition bias toward low complexity. The segment at 606–626 (ANAQPQQQQQQREKEGRRGRR) is disordered.

This sequence belongs to the 7S seed storage protein family. In terms of assembly, component of globulins complexes which accumulate in seeds.

Functionally, seed storage protein. Accumulates during seed development and is hydrolyzed after germination to provide a carbon and nitrogen source for the developing seedling. The sequence is that of Conglutin beta 5 from Lupinus angustifolius (Narrow-leaved blue lupine).